The chain runs to 358 residues: MQKNDDLLRERRKDEHVALGVKQNENLAPSSLEDIQLIGTSIPRYNVKDIDLTTTFLGATVPFPFYINAMTGGSRHTKRINAELAEIAREVAIPMAVGSQSAALKNSSLIDTYQVVREVNPKGIILANVSPEVDIQDGIRAIEMLEADALQIHINPAQELVMQEGDRSFSHWLSRIEAYVKNSPVPVVVKEVGFGMTRETVKTLAEIGVTTVDLAGKGGTNFAQIENDRRRDQAYNFLLDWGISTGQALIDMQHADAPKIAYLASGGIRNPLDIVKALALGADSVGMAGQIISSLKKDGVSKTIEKLELWKEQLRGLFVLANAKNIAELKETPLIVSGELAKWGSLREIDLVQLANRK.

12–13 (RK) is a binding site for substrate. Residues 69 to 71 (AMT), serine 99, and asparagine 128 contribute to the FMN site. Residue glutamine 158 coordinates substrate. Glutamate 159 provides a ligand contact to Mg(2+). Residues lysine 190, threonine 220, 267 to 269 (GIR), and 288 to 289 (AG) each bind FMN.

It belongs to the IPP isomerase type 2 family. Homooctamer. Dimer of tetramers. FMN is required as a cofactor. NADPH serves as cofactor. The cofactor is Mg(2+).

It is found in the cytoplasm. The enzyme catalyses isopentenyl diphosphate = dimethylallyl diphosphate. Its function is as follows. Involved in the biosynthesis of isoprenoids. Catalyzes the 1,3-allylic rearrangement of the homoallylic substrate isopentenyl (IPP) to its allylic isomer, dimethylallyl diphosphate (DMAPP). The sequence is that of Isopentenyl-diphosphate delta-isomerase from Listeria innocua serovar 6a (strain ATCC BAA-680 / CLIP 11262).